A 417-amino-acid chain; its full sequence is Dibenzothiophene monooxygenase (417 aa).

Residues Y96, 129–134 (NASSEN), 159–163 (KHFCS), R282, 369–370 (AR), and H391 each bind FMN. Residues 131–142 (SSENNSHVLDWK) are lid loop.

It belongs to the DszC flavin monooxygenase family. As to quaternary structure, homotetramer. Homodimer. It depends on FAD as a cofactor. Requires NADH as cofactor.

Its subcellular location is the cytoplasm. The enzyme catalyses dibenzothiophene + 2 FMNH2 + 2 O2 = dibenzothiophene 5,5-dioxide + 2 FMN + 2 H2O + 2 H(+). The catalysed reaction is dibenzothiophene + FMNH2 + O2 = dibenzothiophene 5-oxide + FMN + H2O + H(+). It carries out the reaction dibenzothiophene 5-oxide + FMNH2 + O2 = dibenzothiophene 5,5-dioxide + FMN + H2O + H(+). It functions in the pathway sulfur metabolism; dibenzothiophene degradation. In terms of biological role, catalyzes the first step of the '4S' desulfurization pathway that removes covalently bound sulfur from dibenzothiophene (DBT) without breaking carbon-carbon bonds. Sulfur dioxygenase which converts DBT to DBT-sulfone (DBTO2 or DBT 5,5-dioxide) in a stepwise manner. In DBTO (dibenzothiophene-5-oxide) was reported not to be a substrate, in it is reported to be a substrate. Can also use benzyl sulfide and benzyl sulfoxide as substrates, although benzyl sulfoxide is a poor substrate. The pathway substrate specificity has been augmented using mutagenesis, however no mutations allowed use of alkylated thiophenes. In Rhodococcus qingshengii, this protein is Dibenzothiophene monooxygenase.